The primary structure comprises 342 residues: uncharacterized protein (342 aa).

This is an uncharacterized protein from Magallana gigas (Pacific oyster).